Consider the following 343-residue polypeptide: Phosphate acyltransferase (343 aa).

It belongs to the PlsX family. In terms of assembly, homodimer. Probably interacts with PlsY.

The protein localises to the cytoplasm. It carries out the reaction a fatty acyl-[ACP] + phosphate = an acyl phosphate + holo-[ACP]. The protein operates within lipid metabolism; phospholipid metabolism. In terms of biological role, catalyzes the reversible formation of acyl-phosphate (acyl-PO(4)) from acyl-[acyl-carrier-protein] (acyl-ACP). This enzyme utilizes acyl-ACP as fatty acyl donor, but not acyl-CoA. In Haemophilus ducreyi (strain 35000HP / ATCC 700724), this protein is Phosphate acyltransferase.